The following is a 1157-amino-acid chain: ATP-dependent helicase/deoxyribonuclease subunit B (1157 aa).

The region spanning 1 to 277 is the UvrD-like helicase ATP-binding domain; it reads MTLQIIAGKA…KILLENKRAN (277 aa). 8-15 contacts ATP; it reads GKAGTGKT. A UvrD-like helicase C-terminal domain is found at 271 to 590; that stretch reads LENKRANSDS…VLADMENAKL (320 aa). Residues C794, C1115, C1118, and C1124 each coordinate [4Fe-4S] cluster.

This sequence belongs to the helicase family. AddB/RexB type 1 subfamily. In terms of assembly, heterodimer of AddA and AddB. Requires Mg(2+) as cofactor. [4Fe-4S] cluster serves as cofactor.

Functionally, the heterodimer acts as both an ATP-dependent DNA helicase and an ATP-dependent, dual-direction single-stranded exonuclease. Recognizes the chi site generating a DNA molecule suitable for the initiation of homologous recombination. The AddB subunit has 5' -&gt; 3' nuclease activity but not helicase activity. In Listeria innocua serovar 6a (strain ATCC BAA-680 / CLIP 11262), this protein is ATP-dependent helicase/deoxyribonuclease subunit B.